Consider the following 88-residue polypeptide: Large ribosomal subunit protein bL27 (88 aa).

The interval 1-21 (MAHKKGASSSRNGRDSAAHRL) is disordered.

Belongs to the bacterial ribosomal protein bL27 family.

The protein is Large ribosomal subunit protein bL27 of Mycobacterium ulcerans (strain Agy99).